The following is a 93-amino-acid chain: MPRSLKKGPFVDEHLFRKVVAANEANSKNVIKTWSRRSMIVPAMLGHTIAVHDGRKHIPVFVTETMVGHKLGEFAPTRTFRGHVKDDKRGRRR.

Belongs to the universal ribosomal protein uS19 family.

Functionally, protein S19 forms a complex with S13 that binds strongly to the 16S ribosomal RNA. The polypeptide is Small ribosomal subunit protein uS19 (Leifsonia xyli subsp. xyli (strain CTCB07)).